The following is a 548-amino-acid chain: Solute carrier family 22 member 7 (548 aa).

12 helical membrane passes run 21 to 41 (VALL…PIFL), 146 to 166 (AAST…GYLS), 180 to 200 (VSTL…MFAI), 204 to 224 (LTGS…LEWL), 234 to 254 (VLSS…GYLI), 259 to 279 (WLLL…WWVP), 346 to 366 (ISLC…GLSL), 376 to 397 (YQTQ…YLSV), 404 to 423 (LTQA…RLLV), 432 to 452 (TVLA…AYLF), 466 to 486 (MGLT…AALL), and 493 to 513 (LPKL…LLLP). The segment at 522-548 (ETIQDVERKSAPTSLQEEEMPMKQVQN) is disordered.

The protein belongs to the major facilitator (TC 2.A.1) superfamily. Organic cation transporter (TC 2.A.1.19) family.

It localises to the basolateral cell membrane. Its subcellular location is the apical cell membrane. The protein resides in the cell membrane. The enzyme catalyses orotate(out) + L-glutamate(in) = orotate(in) + L-glutamate(out). It carries out the reaction 3',5'-cyclic GMP(in) = 3',5'-cyclic GMP(out). The catalysed reaction is GMP(in) = GMP(out). It catalyses the reaction 2'-deoxyguanosine(in) = 2'-deoxyguanosine(out). The enzyme catalyses GDP(in) = GDP(out). It carries out the reaction guanosine(in) = guanosine(out). The catalysed reaction is GTP(in) = GTP(out). It catalyses the reaction 3',5'-cyclic AMP(in) = 3',5'-cyclic AMP(out). The enzyme catalyses creatinine(in) = creatinine(out). It carries out the reaction prostaglandin E2(out) = prostaglandin E2(in). The catalysed reaction is 2-oxoglutarate(in) = 2-oxoglutarate(out). It catalyses the reaction glutarate(in) = glutarate(out). The enzyme catalyses urate(out) = urate(in). It carries out the reaction estrone 3-sulfate(out) = estrone 3-sulfate(in). Functions as a Na(+)-independent bidirectional multispecific transporter. Contributes to the renal and hepatic elimination of endogenous organic compounds from the systemic circulation into the urine and bile, respectively. Capable of transporting a wide range of purine and pyrimidine nucleobases, nucleosides and nucleotides, with cGMP, 2'deoxyguanosine and GMP being the preferred substrates. Functions as a pH- and chloride-independent cGMP bidirectional facilitative transporter that can regulate both intracellular and extracellular levels of cGMP and may be involved in cGMP signaling pathways. Mediates orotate/glutamate bidirectional exchange and most likely display a physiological role in hepatic release of glutamate into the blood. Involved in renal secretion and possible reabsorption of creatinine. Able to uptake prostaglandin E2 (PGE2) and may contribute to PGE2 renal excretion. Also transports alpha-ketoglutarate and urate. Apart from the orotate/glutamate exchange, the counterions for the uptake of other SLC22A7/OAT2 substrates remain to be identified. This Pongo abelii (Sumatran orangutan) protein is Solute carrier family 22 member 7 (SLC22A7).